The primary structure comprises 823 residues: Apoptosis-resistant E3 ubiquitin protein ligase 1 (823 aa).

Residues 64–158 (WDWKDPYEVG…VAYSPYYKIF (95 aa)) form a Filamin repeat. The segment at 315 to 345 (PPMHMSSSQRRPSTAIEEDDEDSPSECHTPE) is disordered. The interaction with SOCS2 stretch occupies residues 483–789 (SISDWSKNFE…THSTLPTAHT (307 aa)). One can recognise an HECT domain in the interval 483–823 (SISDWSKNFE…SEGCEGFGML (341 aa)). The active-site Glycyl thioester intermediate is the Cys-790.

In terms of assembly, interacts with SOCS2. Interacts (via HECT domain) with HTRA2, DIABLO/SMAC and SEPTIN4; in the cytoplasm following induction of apoptosis. In terms of processing, autoubiquitinated in vitro in the presence of E2 enzyme UBE2D1/UBCH5A. In terms of tissue distribution, detected in brain, testis, heart, liver, lung and kidney with very low levels in skeletal muscle and spleen.

It carries out the reaction S-ubiquitinyl-[E2 ubiquitin-conjugating enzyme]-L-cysteine + [acceptor protein]-L-lysine = [E2 ubiquitin-conjugating enzyme]-L-cysteine + N(6)-ubiquitinyl-[acceptor protein]-L-lysine.. It functions in the pathway protein modification; protein ubiquitination. E3 ubiquitin-protein ligase that catalyzes 'Lys-11'- or 'Lys-33'-linked polyubiquitin chains, with some preference for 'Lys-33' linkages. E3 ubiquitin-protein ligases accept ubiquitin from an E2 ubiquitin-conjugating enzyme in the form of a thioester and then directly transfers the ubiquitin to targeted substrates. Ubiquitinates SEPTIN4, DIABLO/SMAC and HTRA2 in vitro. Modulates pulmonary inflammation by targeting SOCS2 for ubiquitination and subsequent degradation by the proteasome. The protein is Apoptosis-resistant E3 ubiquitin protein ligase 1 (Arel1) of Mus musculus (Mouse).